Consider the following 138-residue polypeptide: Superoxide dismutase [Mn] (138 aa).

4 residues coordinate Mn(2+): H2, H49, D133, and H137.

Belongs to the iron/manganese superoxide dismutase family. The cofactor is Mn(2+).

The catalysed reaction is 2 superoxide + 2 H(+) = H2O2 + O2. Destroys superoxide anion radicals which are normally produced within the cells and which are toxic to biological systems. The protein is Superoxide dismutase [Mn] (sodA) of Mycobacterium szulgai.